The following is a 753-amino-acid chain: Catalase-peroxidase (753 aa).

The signal sequence occupies residues 1 to 39 (MLPRVNKRSNCIAKKTSNRLISAVSLAIASLCISQSALA). A cross-link (tryptophyl-tyrosyl-methioninium (Trp-Tyr) (with M-267)) is located at residues 118-241 (WHSTGTYRMS…LAAVQMGLIY (124 aa)). Catalysis depends on histidine 119, which acts as the Proton acceptor. The tryptophyl-tyrosyl-methioninium (Tyr-Met) (with W-118) cross-link spans 241–267 (YVNPEGPNGNHDPISAAADIRDVFARM). Position 282 (histidine 282) interacts with heme b.

Belongs to the peroxidase family. Peroxidase/catalase subfamily. As to quaternary structure, homodimer or homotetramer. It depends on heme b as a cofactor. Formation of the three residue Trp-Tyr-Met cross-link is important for the catalase, but not the peroxidase activity of the enzyme.

The catalysed reaction is H2O2 + AH2 = A + 2 H2O. It carries out the reaction 2 H2O2 = O2 + 2 H2O. In terms of biological role, bifunctional enzyme with both catalase and broad-spectrum peroxidase activity. The sequence is that of Catalase-peroxidase from Pseudoalteromonas atlantica (strain T6c / ATCC BAA-1087).